Here is a 209-residue protein sequence, read N- to C-terminus: Uracil phosphoribosyltransferase (209 aa).

Residues Arg79, Arg104, and Asp131–Ser139 contribute to the 5-phospho-alpha-D-ribose 1-diphosphate site. Uracil is bound by residues Ile194 and Gly199–Ala201. 5-phospho-alpha-D-ribose 1-diphosphate is bound at residue Asp200.

The protein belongs to the UPRTase family. It depends on Mg(2+) as a cofactor.

The enzyme catalyses UMP + diphosphate = 5-phospho-alpha-D-ribose 1-diphosphate + uracil. It functions in the pathway pyrimidine metabolism; UMP biosynthesis via salvage pathway; UMP from uracil: step 1/1. With respect to regulation, allosterically activated by GTP. Catalyzes the conversion of uracil and 5-phospho-alpha-D-ribose 1-diphosphate (PRPP) to UMP and diphosphate. This Rhizobium meliloti (strain 1021) (Ensifer meliloti) protein is Uracil phosphoribosyltransferase.